The primary structure comprises 468 residues: 6-phosphogluconate dehydrogenase, decarboxylating (468 aa).

NADP(+) contacts are provided by residues 10–15 (GMAVMG), 33–35 (NRS), 74–76 (VKA), and asparagine 102. Substrate is bound by residues asparagine 102 and 128–130 (SGG). The active-site Proton acceptor is the lysine 183. 186-187 (HN) provides a ligand contact to substrate. Glutamate 190 acts as the Proton donor in catalysis. Substrate is bound by residues tyrosine 191, lysine 260, arginine 287, arginine 445, and histidine 451.

Belongs to the 6-phosphogluconate dehydrogenase family. Homodimer.

The catalysed reaction is 6-phospho-D-gluconate + NADP(+) = D-ribulose 5-phosphate + CO2 + NADPH. It functions in the pathway carbohydrate degradation; pentose phosphate pathway; D-ribulose 5-phosphate from D-glucose 6-phosphate (oxidative stage): step 3/3. Catalyzes the oxidative decarboxylation of 6-phosphogluconate to ribulose 5-phosphate and CO(2), with concomitant reduction of NADP to NADPH. The polypeptide is 6-phosphogluconate dehydrogenase, decarboxylating (gnd) (Escherichia coli (strain K12)).